The sequence spans 603 residues: UvrABC system protein C (603 aa).

Residues 15 to 92 enclose the GIY-YIG domain; the sequence is DQPGCYLMKD…IKKHDPRFNI (78 aa). The UVR domain occupies 197–232; the sequence is KTVKNDLMKKMQEAAENMEFEKAGEFRDQINAIETT.

This sequence belongs to the UvrC family. Interacts with UvrB in an incision complex.

It localises to the cytoplasm. In terms of biological role, the UvrABC repair system catalyzes the recognition and processing of DNA lesions. UvrC both incises the 5' and 3' sides of the lesion. The N-terminal half is responsible for the 3' incision and the C-terminal half is responsible for the 5' incision. The polypeptide is UvrABC system protein C (Listeria monocytogenes serotype 4b (strain F2365)).